A 112-amino-acid polypeptide reads, in one-letter code: Protein preY, mitochondrial (112 aa).

The transit peptide at 1–34 (MLTTTCRRLSQALQRPHALSAVAQRCLRAPGARS) directs the protein to the mitochondrion. Residues 49-95 (HPALLQFLVCPLSKKPLRYDASTNELINDELGIAYPIIDGVPNMIPQ) enclose the TRM112 domain.

The protein belongs to the PREY family. In terms of assembly, interacts (via TRM112 domain) with NDUFAF5; the interaction is direct and stabilizes NDUFAF5 protein. Interacts with COQ5; the interaction is direct, stabilizes COQ5 protein and associates PYURF with COQ enzyme complex.

The protein localises to the mitochondrion. Its function is as follows. In mitochondria, S-adenosylmethionine-dependent methyltransferase chaperone that supports both coenzyme Q biosynthesis, by stabilizing its components, such as COQ5, and NADH:ubiquinone oxidoreductase complex (complex I, MT-ND1) assembly, by stabilizing complex I assembly factors, such as NDUFAF5. This Rattus norvegicus (Rat) protein is Protein preY, mitochondrial (Pyurf).